Reading from the N-terminus, the 129-residue chain is Ribosome-binding factor A (129 aa).

Belongs to the RbfA family. In terms of assembly, monomer. Binds 30S ribosomal subunits, but not 50S ribosomal subunits or 70S ribosomes.

The protein resides in the cytoplasm. Its function is as follows. One of several proteins that assist in the late maturation steps of the functional core of the 30S ribosomal subunit. Associates with free 30S ribosomal subunits (but not with 30S subunits that are part of 70S ribosomes or polysomes). Required for efficient processing of 16S rRNA. May interact with the 5'-terminal helix region of 16S rRNA. This Azotobacter vinelandii (strain DJ / ATCC BAA-1303) protein is Ribosome-binding factor A.